Consider the following 2508-residue polypeptide: Male gametocyte surface protein P230p (2508 aa).

A signal peptide spans 1 to 34 (MFIYLFIYLFFKMDKKRTFYYLFFFFTFLVYVLY). 4 N-linked (GlcNAc...) asparagine glycosylation sites follow: asparagine 230, asparagine 254, asparagine 362, and asparagine 414. The 123-residue stretch at 394-516 (KILGLSTNEK…GLGETSVDKD (123 aa)) folds into the 6-Cys 1 domain. Cysteine 443 and cysteine 493 are oxidised to a cystine. Asparagine 601 and asparagine 674 each carry an N-linked (GlcNAc...) asparagine glycan. 5 6-Cys domains span residues 676–800 (SVSF…IVKR), 831–1096 (ITYL…LKSF), 1099–1231 (PIEG…LELN), 1268–1428 (KKHI…IPQH), and 1433–1565 (KFYG…NEDI). A disulfide bridge connects residues cysteine 680 and cysteine 700. An N-linked (GlcNAc...) asparagine glycan is attached at asparagine 703. Cystine bridges form between cysteine 714–cysteine 775 and cysteine 725–cysteine 773. Asparagine 779, asparagine 849, asparagine 986, asparagine 995, asparagine 1065, and asparagine 1074 each carry an N-linked (GlcNAc...) asparagine glycan. Intrachain disulfides connect cysteine 835-cysteine 856 and cysteine 871-cysteine 1072. 3 disulfide bridges follow: cysteine 1103-cysteine 1129, cysteine 1144-cysteine 1206, and cysteine 1157-cysteine 1204. A glycan (N-linked (GlcNAc...) asparagine) is linked at asparagine 1231. 5 disulfide bridges follow: cysteine 1272–cysteine 1293, cysteine 1308–cysteine 1404, cysteine 1437–cysteine 1464, cysteine 1478–cysteine 1547, and cysteine 1488–cysteine 1545. N-linked (GlcNAc...) asparagine glycosylation occurs at asparagine 1385. N-linked (GlcNAc...) asparagine glycosylation is found at asparagine 1525, asparagine 1550, asparagine 1567, asparagine 1750, asparagine 1755, and asparagine 1788. 6-Cys domains lie at 1656 to 1804 (KKKI…IKKN) and 1807 to 1984 (KILG…IVGD). Residues cysteine 1704 and cysteine 1782 are joined by a disulfide bond. 3 disulfide bridges follow: cysteine 1811/cysteine 1883, cysteine 1897/cysteine 1966, and cysteine 1908/cysteine 1964. Asparagine 2016 and asparagine 2047 each carry an N-linked (GlcNAc...) asparagine glycan. The segment at 2081-2113 (SDEGDGYQADEDIGGEDDAEDVDGEGDDEDDNI) is disordered. A compositionally biased stretch (acidic residues) spans 2082 to 2112 (DEGDGYQADEDIGGEDDAEDVDGEGDDEDDN). Residues asparagine 2143, asparagine 2211, asparagine 2239, and asparagine 2255 are each glycosylated (N-linked (GlcNAc...) asparagine). 2 6-Cys domains span residues 2197–2354 (IINI…VKSN) and 2357–2481 (KIYG…YEPY). 3 disulfide bridges follow: cysteine 2361/cysteine 2386, cysteine 2400/cysteine 2461, and cysteine 2411/cysteine 2459.

The protein resides in the cell surface. Its subcellular location is the cell membrane. Functionally, plays an essential role in male gamete fertility. Required for the binding to erythrocytes and thus, for the formation of exflagellation centers. The polypeptide is Male gametocyte surface protein P230p (PFS230P) (Plasmodium falciparum (isolate 3D7)).